A 475-amino-acid chain; its full sequence is Sulfate adenylyltransferase subunit 1 (475 aa).

The tr-type G domain occupies 25 to 239; that stretch reads KSLLRFLTCG…EVLETVEIQR (215 aa). The tract at residues 34 to 41 is G1; sequence GSVDDGKS. Position 34 to 41 (34 to 41) interacts with GTP; it reads GSVDDGKS. A G2 region spans residues 92-96; that stretch reads GITID. Residues 113-116 are G3; it reads DTPG. Residues 113–117 and 168–171 each bind GTP; these read DTPGH and NKMD. A G4 region spans residues 168-171; it reads NKMD. A G5 region spans residues 206–208; that stretch reads SAL.

Belongs to the TRAFAC class translation factor GTPase superfamily. Classic translation factor GTPase family. CysN/NodQ subfamily. As to quaternary structure, heterodimer composed of CysD, the smaller subunit, and CysN.

It catalyses the reaction sulfate + ATP + H(+) = adenosine 5'-phosphosulfate + diphosphate. The protein operates within sulfur metabolism; hydrogen sulfide biosynthesis; sulfite from sulfate: step 1/3. With CysD forms the ATP sulfurylase (ATPS) that catalyzes the adenylation of sulfate producing adenosine 5'-phosphosulfate (APS) and diphosphate, the first enzymatic step in sulfur assimilation pathway. APS synthesis involves the formation of a high-energy phosphoric-sulfuric acid anhydride bond driven by GTP hydrolysis by CysN coupled to ATP hydrolysis by CysD. This Escherichia coli (strain UTI89 / UPEC) protein is Sulfate adenylyltransferase subunit 1.